We begin with the raw amino-acid sequence, 441 residues long: tRNA(Ile)-lysidine synthase (441 aa).

27–32 (SGGVDS) is an ATP binding site.

Belongs to the tRNA(Ile)-lysidine synthase family.

It is found in the cytoplasm. The catalysed reaction is cytidine(34) in tRNA(Ile2) + L-lysine + ATP = lysidine(34) in tRNA(Ile2) + AMP + diphosphate + H(+). In terms of biological role, ligates lysine onto the cytidine present at position 34 of the AUA codon-specific tRNA(Ile) that contains the anticodon CAU, in an ATP-dependent manner. Cytidine is converted to lysidine, thus changing the amino acid specificity of the tRNA from methionine to isoleucine. The polypeptide is tRNA(Ile)-lysidine synthase (Proteus mirabilis (strain HI4320)).